The primary structure comprises 512 residues: Probable cobyric acid synthase (512 aa).

Residues 275-460 (SVTVAVPHLP…LHGLFGNDAA (186 aa)) enclose the GATase cobBQ-type domain. Residue Cys-353 is the Nucleophile of the active site. His-452 is a catalytic residue.

It belongs to the CobB/CobQ family. CobQ subfamily.

It participates in cofactor biosynthesis; adenosylcobalamin biosynthesis. Catalyzes amidations at positions B, D, E, and G on adenosylcobyrinic A,C-diamide. NH(2) groups are provided by glutamine, and one molecule of ATP is hydrogenolyzed for each amidation. This Halobacterium salinarum (strain ATCC 29341 / DSM 671 / R1) protein is Probable cobyric acid synthase.